Reading from the N-terminus, the 170-residue chain is Protein-export protein SecB (170 aa).

It belongs to the SecB family. In terms of assembly, homotetramer, a dimer of dimers. One homotetramer interacts with 1 SecA dimer.

The protein localises to the cytoplasm. Its function is as follows. One of the proteins required for the normal export of preproteins out of the cell cytoplasm. It is a molecular chaperone that binds to a subset of precursor proteins, maintaining them in a translocation-competent state. It also specifically binds to its receptor SecA. The sequence is that of Protein-export protein SecB from Xanthomonas campestris pv. campestris (strain 8004).